The primary structure comprises 158 residues: Regulator of sigma D (158 aa).

It belongs to the Rsd/AlgQ family. As to quaternary structure, interacts with RpoD.

It localises to the cytoplasm. In terms of biological role, binds RpoD and negatively regulates RpoD-mediated transcription activation by preventing the interaction between the primary sigma factor RpoD with the catalytic core of the RNA polymerase and with promoter DNA. May be involved in replacement of the RNA polymerase sigma subunit from RpoD to RpoS during the transition from exponential growth to the stationary phase. The chain is Regulator of sigma D from Shigella dysenteriae serotype 1 (strain Sd197).